We begin with the raw amino-acid sequence, 297 residues long: 33 kDa chaperonin (297 aa).

Cystine bridges form between C233-C235 and C267-C270.

The protein belongs to the HSP33 family. Post-translationally, under oxidizing conditions two disulfide bonds are formed involving the reactive cysteines. Under reducing conditions zinc is bound to the reactive cysteines and the protein is inactive.

The protein localises to the cytoplasm. Redox regulated molecular chaperone. Protects both thermally unfolding and oxidatively damaged proteins from irreversible aggregation. Plays an important role in the bacterial defense system toward oxidative stress. In Haemophilus ducreyi (strain 35000HP / ATCC 700724), this protein is 33 kDa chaperonin.